Reading from the N-terminus, the 850-residue chain is Mitogen-activated protein kinase kinase kinase 11 (850 aa).

The residue at position 11 (Ser11) is a Phosphoserine. Positions 18-31 are enriched in gly residues; that stretch reads GSGSGGGGGSGGVR. Positions 18 to 37 are disordered; that stretch reads GSGSGGGGGSGGVRPEGSPK. Ser35 carries the phosphoserine modification. Residues 42-106 enclose the SH3 domain; it reads YANPVWTALF…PSNYVSRGGG (65 aa). A Protein kinase domain is found at 118 to 380; it reads LRLEEVIGIG…ASILQQLEAL (263 aa). ATP contacts are provided by residues 124–132 and Lys145; that span reads IGIGGFGKV. The active-site Proton acceptor is Asp242. The residue at position 278 (Thr278) is a Phosphothreonine; by autocatalysis. At Ser282 the chain carries Phosphoserine; by autocatalysis and MAP4K1. Ser395 is subject to Phosphoserine. Leucine-zipper stretches follow at residues 404–425 and 439–460; these read IQGL…EEEL and LRRR…ELTL. Phosphoserine is present on residues Ser508, Ser525, Ser549, Ser556, and Ser557. Positions 536-850 are disordered; the sequence is LEPAESGQTW…QAPWAPEAGP (315 aa). Residues 551–563 are compositionally biased toward basic and acidic residues; sequence RRLDDSSNGERRA. Residues 598-610 show a composition bias toward low complexity; the sequence is SSPLGSPSTPPAL. The residue at position 655 (Ser655) is a Phosphoserine. Over residues 677 to 693 the composition is skewed to pro residues; sequence TAPPPAQMASPCPPDLP. Residue Thr712 is modified to Phosphothreonine. Residues Ser728, Ser731, Ser743, Ser751, Ser761, Ser773, Ser792, Ser796, and Ser818 each carry the phosphoserine modification. The segment covering 790–802 has biased composition (pro residues); it reads RPSPLPSPQPAPR. Residues 803 to 819 are compositionally biased toward low complexity; sequence RAPWTLFPDSDPFWDSP.

The protein belongs to the protein kinase superfamily. STE Ser/Thr protein kinase family. MAP kinase kinase kinase subfamily. In terms of assembly, homodimer; undergoes dimerization during activation. Interacts with MAP2K4/MKK4. Interacts with MAP2K7/MKK7. Found in a complex with SH3RF1, RAC1, MAP2K7/MKK7, MAPK8IP1/JIP1 and MAPK8/JNK1. The cofactor is Mg(2+). In terms of processing, autophosphorylation on serine and threonine residues within the activation loop plays a role in enzyme activation. Thr-278 is likely to be the main autophosphorylation site. Phosphorylation of Ser-556 and Ser-557 is induced by CDC42.

Its subcellular location is the cytoplasm. It localises to the cytoskeleton. The protein resides in the microtubule organizing center. The protein localises to the centrosome. The enzyme catalyses L-seryl-[protein] + ATP = O-phospho-L-seryl-[protein] + ADP + H(+). The catalysed reaction is L-threonyl-[protein] + ATP = O-phospho-L-threonyl-[protein] + ADP + H(+). With respect to regulation, homodimerization via the leucine zipper domains is required for autophosphorylation and subsequent activation. In terms of biological role, activates the JUN N-terminal pathway. Required for serum-stimulated cell proliferation and for mitogen and cytokine activation of MAPK14 (p38), MAPK3 (ERK) and MAPK8 (JNK1) through phosphorylation and activation of MAP2K4/MKK4 and MAP2K7/MKK7. Plays a role in mitogen-stimulated phosphorylation and activation of BRAF, but does not phosphorylate BRAF directly. Influences microtubule organization during the cell cycle. This chain is Mitogen-activated protein kinase kinase kinase 11 (Map3k11), found in Rattus norvegicus (Rat).